Reading from the N-terminus, the 510-residue chain is MKTITLRPGQMTLADLRHIYQHPVHITLDESAYVPIQQSVDCVQAILAEQRTAYGINTGFGLLASTRIATEDLENLQRSIVLSHAAGVGEANDDAIVRLIMVLKINSLARGFSGIRLEVIQALITLVNAGVYPHIPLKGSVGASGDLAPLAHMSLLLLGEGKARYQGEWLPAHTALAQAGLQPLTLAAKEGLALLNGTQVSAAYALRGLFEAEDLYAAASVFGCLTVDAALGSRSPFDARIHAVRGQRGQIDAASTYRHLLGERSEISESHKNCDKVQDPYSLRCQPQVMGACLGQIRQAAEVLAIESNAVSDNPLVFAEQGDVLSGGNFHAEPVAMAADNLALALAEVGSLSECRISLMMDKHMSQLPPFLVENGGVNSGFMIAQVTAAALTSENKGLAFPASVDSIPTSANQEDHVSMAPRAGKRLWEMAENVRNILAIEWLAACQGLDLRKGLRTSAILEPARQLLRQHVTYYDKDRFFAPDIEVASQLIAQRHMNELMPAKLLPSL.

A cross-link (5-imidazolinone (Ala-Gly)) is located at residues 143–145; sequence ASG. Position 144 is a 2,3-didehydroalanine (Ser) (S144).

The protein belongs to the PAL/histidase family. Post-translationally, contains an active site 4-methylidene-imidazol-5-one (MIO), which is formed autocatalytically by cyclization and dehydration of residues Ala-Ser-Gly.

It localises to the cytoplasm. The catalysed reaction is L-histidine = trans-urocanate + NH4(+). It participates in amino-acid degradation; L-histidine degradation into L-glutamate; N-formimidoyl-L-glutamate from L-histidine: step 1/3. In Yersinia pestis, this protein is Histidine ammonia-lyase.